Consider the following 117-residue polypeptide: Ribosome-binding factor A (117 aa).

This sequence belongs to the RbfA family. In terms of assembly, monomer. Binds 30S ribosomal subunits, but not 50S ribosomal subunits or 70S ribosomes.

The protein resides in the cytoplasm. In terms of biological role, one of several proteins that assist in the late maturation steps of the functional core of the 30S ribosomal subunit. Associates with free 30S ribosomal subunits (but not with 30S subunits that are part of 70S ribosomes or polysomes). Required for efficient processing of 16S rRNA. May interact with the 5'-terminal helix region of 16S rRNA. This is Ribosome-binding factor A from Lacticaseibacillus casei (strain BL23) (Lactobacillus casei).